The chain runs to 282 residues: Heme oxygenase 1, chloroplastic (282 aa).

The transit peptide at 1-56 (MASATVVSQIQSLYIIKPRLSPPPPPHRQFRSIYFPTTRLLQQHRFRQMKSVVIVP) directs the protein to the chloroplast. H86 lines the heme b pocket.

This sequence belongs to the heme oxygenase family. Highly expressed in root nodules and, to a lower extent, in leaves, shoots, roots, flowers and pods (at protein level).

It is found in the plastid. It localises to the chloroplast. It carries out the reaction heme b + 3 reduced [NADPH--hemoprotein reductase] + 3 O2 = biliverdin IXalpha + CO + Fe(2+) + 3 oxidized [NADPH--hemoprotein reductase] + 3 H2O + H(+). Key enzyme in the synthesis of the chromophore of the phytochrome family of plant photoreceptors. Catalyzes the opening of the heme ring to form the open-chain tetrapyrrole biliverdin IX with the release of iron and carbon monoxide (CO). Produces specifically the biliverdin IX-alpha isomer. Can form complex with heme, is ferredoxin-dependent and its activity is increased in the presence of ascorbate. May affect the plastid-to-nucleus signaling pathway by perturbing tetrapyrrole synthesis. The plastid-to-nucleus signal plays an important role in the coordinated expression of both nuclear- and chloroplast-localized genes that encode photosynthesis-related proteins. Required for efficient symbiotic nitrogen fixation (SNF) in root nodules. Responsible for heme catabolism in uninfected nodule interstitial cells (UC), preventing superoxide production under stressful conditions (e.g. nitrate exposure and darkness) and catalyzing biliverdin (BV) production in senescing green nodules. The protein is Heme oxygenase 1, chloroplastic of Lotus japonicus (Lotus corniculatus var. japonicus).